The primary structure comprises 350 residues: Nicotinate-nucleotide--dimethylbenzimidazole phosphoribosyltransferase (350 aa).

Catalysis depends on Glu-316, which acts as the Proton acceptor.

It belongs to the CobT family.

It carries out the reaction 5,6-dimethylbenzimidazole + nicotinate beta-D-ribonucleotide = alpha-ribazole 5'-phosphate + nicotinate + H(+). It functions in the pathway nucleoside biosynthesis; alpha-ribazole biosynthesis; alpha-ribazole from 5,6-dimethylbenzimidazole: step 1/2. Catalyzes the synthesis of alpha-ribazole-5'-phosphate from nicotinate mononucleotide (NAMN) and 5,6-dimethylbenzimidazole (DMB). In Pseudomonas syringae pv. syringae (strain B728a), this protein is Nicotinate-nucleotide--dimethylbenzimidazole phosphoribosyltransferase.